We begin with the raw amino-acid sequence, 396 residues long: Elongation factor Tu (396 aa).

One can recognise a tr-type G domain in the interval 10–206; it reads KPHVNVGTIG…ALDTYIPTPE (197 aa). Residues 19–26 form a G1 region; sequence GHVDHGKT. 19–26 contacts GTP; the sequence is GHVDHGKT. Thr26 is a Mg(2+) binding site. The segment at 60-64 is G2; the sequence is GITIN. A G3 region spans residues 81-84; the sequence is DCPG. GTP-binding positions include 81–85 and 136–139; these read DCPGH and NKAD. The segment at 136–139 is G4; that stretch reads NKAD. Residues 174 to 176 are G5; the sequence is SAK.

Belongs to the TRAFAC class translation factor GTPase superfamily. Classic translation factor GTPase family. EF-Tu/EF-1A subfamily. Monomer.

It is found in the cytoplasm. The enzyme catalyses GTP + H2O = GDP + phosphate + H(+). Functionally, GTP hydrolase that promotes the GTP-dependent binding of aminoacyl-tRNA to the A-site of ribosomes during protein biosynthesis. The protein is Elongation factor Tu of Janthinobacterium sp. (strain Marseille) (Minibacterium massiliensis).